Reading from the N-terminus, the 317-residue chain is Beta-ketoacyl-[acyl-carrier-protein] synthase III (317 aa).

Residues Cys112 and His244 contribute to the active site. The tract at residues 245–249 is ACP-binding; that stretch reads QANLR. Residue Asn274 is part of the active site.

The protein belongs to the thiolase-like superfamily. FabH family. Homodimer.

The protein localises to the cytoplasm. It catalyses the reaction malonyl-[ACP] + acetyl-CoA + H(+) = 3-oxobutanoyl-[ACP] + CO2 + CoA. It functions in the pathway lipid metabolism; fatty acid biosynthesis. Its function is as follows. Catalyzes the condensation reaction of fatty acid synthesis by the addition to an acyl acceptor of two carbons from malonyl-ACP. Catalyzes the first condensation reaction which initiates fatty acid synthesis and may therefore play a role in governing the total rate of fatty acid production. Possesses both acetoacetyl-ACP synthase and acetyl transacylase activities. Its substrate specificity determines the biosynthesis of branched-chain and/or straight-chain of fatty acids. This is Beta-ketoacyl-[acyl-carrier-protein] synthase III from Pectobacterium atrosepticum (strain SCRI 1043 / ATCC BAA-672) (Erwinia carotovora subsp. atroseptica).